Consider the following 447-residue polypeptide: Biotin carboxylase (447 aa).

A Biotin carboxylation domain is found at 1-447 (MKFDKILIAN…STSFVQEMNK (447 aa)). Residues K117, K159, 165-166 (GG), 201-204 (EKFI), and H209 each bind ATP. An ATP-grasp domain is found at 121-318 (KETMQKAGVP…LLVEQIRIAQ (198 aa)). K238 serves as a coordination point for hydrogencarbonate. ATP-binding residues include E276 and E289. Residues E276, E289, and N291 each coordinate Mg(2+). Residues E276, E289, and N291 each coordinate Mn(2+). Residues R293, V296, and R339 each coordinate hydrogencarbonate. Residue R293 is part of the active site. Position 339 (R339) interacts with biotin.

As to quaternary structure, acetyl-CoA carboxylase is a heterohexamer of biotin carboxyl carrier protein, biotin carboxylase and the two subunits of carboxyl transferase in a 2:2 complex. Mg(2+) is required as a cofactor. Requires Mn(2+) as cofactor.

The enzyme catalyses N(6)-biotinyl-L-lysyl-[protein] + hydrogencarbonate + ATP = N(6)-carboxybiotinyl-L-lysyl-[protein] + ADP + phosphate + H(+). The protein operates within lipid metabolism; malonyl-CoA biosynthesis; malonyl-CoA from acetyl-CoA: step 1/1. This protein is a component of the acetyl coenzyme A carboxylase complex; first, biotin carboxylase catalyzes the carboxylation of the carrier protein and then the transcarboxylase transfers the carboxyl group to form malonyl-CoA. This is Biotin carboxylase (accC) from Nostoc sp. (strain PCC 7120 / SAG 25.82 / UTEX 2576).